We begin with the raw amino-acid sequence, 915 residues long: p53-induced death domain-containing protein 1 (915 aa).

An N-acetylalanine modification is found at Ala-2. LRR repeat units follow at residues 131–152 (CLAH…VPEL), 154–176 (GLDA…GALP), 177–199 (ALTF…GSLS), 200–221 (TLQR…IGNL), 223–245 (SLSE…AGLR), 246–268 (SLRL…VHLP), and 269–290 (LITR…LLDA). The residue at position 304 (Ser-304) is a Phosphoserine. ZU5 domains are found at residues 327 to 459 (DLDS…VLRP) and 460 to 601 (VSNT…WYTT). Peptidase S68 stretches follow at residues 428–457 (DLET…LVVL) and 571–599 (DITT…WLWY). Catalysis depends on residues His-449, Ser-451, His-591, and Ser-593. A UPA domain region spans residues 585–721 (ARFQVTHFSW…TTALDREAQD (137 aa)). Positions 793–878 (TQSNLLSVAS…DVAEEVRAIL (86 aa)) constitute a Death domain. Positions 888 to 915 (SIRRTGLAPEDSTLPGTSASQTPESAQA) are disordered. The span at 901–915 (LPGTSASQTPESAQA) shows a compositional bias: polar residues.

In terms of assembly, forms a complex named the PIDDosome with CASP2 and CRADD. Forms a complex with IKBKG and RIPK1. Interacts with FADD and MADD. In terms of processing, undergoes autoproteolytic processing whose extent either directs cells towards survival or apoptotic pathways. Autoproteolytically cleaved into two main fragments PIDD-N and PIDD-C. PIDD-C can be further processed into PIDD-CC, a processing which is enhanced by DNA damage. The cleavage producing PIDD-C is required for translocation of PIDD1 to the nucleus upon DNA damage and activation of NF-kappa-B. PIDD-CC mediates the interaction with CRADD and the cleavage producing PIDD-CC is required for the activation of CASP2. PIDD-N remains associated with PIDD-C and PIDD-CC after cleavage. In terms of tissue distribution, ubiquitous.

It localises to the cytoplasm. The protein localises to the nucleus. Functionally, component of the DNA damage/stress response pathway that functions downstream of p53/TP53 and can either promote cell survival or apoptosis. Associated with CRADD and the CASP2 caspase, it forms the PIDDosome a complex that activates CASP2 and triggers apoptosis. Associated with IKBKG and RIPK1, it enhances sumoylation and ubiquitination of IKBKG which is important for activation of the transcription factor NF-kappa-B. This is p53-induced death domain-containing protein 1 from Mus musculus (Mouse).